The primary structure comprises 426 residues: Serine--tRNA ligase (426 aa).

Position 230 to 232 (230 to 232 (TSE)) interacts with L-serine. 261-263 (RSE) serves as a coordination point for ATP. Residue Glu284 coordinates L-serine. 348–351 (EISS) provides a ligand contact to ATP. Ser384 lines the L-serine pocket.

The protein belongs to the class-II aminoacyl-tRNA synthetase family. Type-1 seryl-tRNA synthetase subfamily. As to quaternary structure, homodimer. The tRNA molecule binds across the dimer.

The protein localises to the cytoplasm. It carries out the reaction tRNA(Ser) + L-serine + ATP = L-seryl-tRNA(Ser) + AMP + diphosphate + H(+). The enzyme catalyses tRNA(Sec) + L-serine + ATP = L-seryl-tRNA(Sec) + AMP + diphosphate + H(+). It functions in the pathway aminoacyl-tRNA biosynthesis; selenocysteinyl-tRNA(Sec) biosynthesis; L-seryl-tRNA(Sec) from L-serine and tRNA(Sec): step 1/1. Its function is as follows. Catalyzes the attachment of serine to tRNA(Ser). Is also able to aminoacylate tRNA(Sec) with serine, to form the misacylated tRNA L-seryl-tRNA(Sec), which will be further converted into selenocysteinyl-tRNA(Sec). The sequence is that of Serine--tRNA ligase from Sphingopyxis alaskensis (strain DSM 13593 / LMG 18877 / RB2256) (Sphingomonas alaskensis).